Here is a 482-residue protein sequence, read N- to C-terminus: Cysteine--tRNA ligase (482 aa).

Zn(2+) is bound at residue Cys29. The short motif at 31–41 (PTVYDSAHVGH) is the 'HIGH' region element. The Zn(2+) site is built by Cys210, His235, and Glu239. A 'KMSKS' region motif is present at residues 272-276 (KMSKS). Lys275 provides a ligand contact to ATP.

The protein belongs to the class-I aminoacyl-tRNA synthetase family. As to quaternary structure, monomer. Requires Zn(2+) as cofactor.

It localises to the cytoplasm. The catalysed reaction is tRNA(Cys) + L-cysteine + ATP = L-cysteinyl-tRNA(Cys) + AMP + diphosphate. The sequence is that of Cysteine--tRNA ligase from Anaeromyxobacter sp. (strain Fw109-5).